Consider the following 358-residue polypeptide: Alanine racemase (358 aa).

The active-site Proton acceptor; specific for D-alanine is the K35. K35 is modified (N6-(pyridoxal phosphate)lysine). Residue R130 participates in substrate binding. The active-site Proton acceptor; specific for L-alanine is Y255. Residue M303 participates in substrate binding.

Belongs to the alanine racemase family. Pyridoxal 5'-phosphate is required as a cofactor.

The enzyme catalyses L-alanine = D-alanine. The protein operates within amino-acid biosynthesis; D-alanine biosynthesis; D-alanine from L-alanine: step 1/1. In terms of biological role, catalyzes the interconversion of L-alanine and D-alanine. May also act on other amino acids. The sequence is that of Alanine racemase (alr) from Shewanella baltica (strain OS185).